Here is a 32-residue protein sequence, read N- to C-terminus: Small ribosomal subunit protein uS19 (32 aa).

It belongs to the universal ribosomal protein uS19 family.

Protein S19 forms a complex with S13 that binds strongly to the 16S ribosomal RNA. This chain is Small ribosomal subunit protein uS19 (rpsS), found in Yersinia enterocolitica.